Reading from the N-terminus, the 284-residue chain is Ribosome-associated protein oga1 (284 aa).

Residues 1–284 (MSVASKNLFD…LSETDFPALA (284 aa)) are disordered. Basic and acidic residues predominate over residues 22-36 (TEKKTAASRDKKRSD). Ser-37 and Ser-51 each carry phosphoserine. Composition is skewed to basic and acidic residues over residues 52 to 73 (RKRD…ADQP) and 119 to 141 (GREF…ERGW). Residue Thr-160 is modified to Phosphothreonine. Ser-162 is subject to Phosphoserine. At Thr-166 the chain carries Phosphothreonine. 2 stretches are compositionally biased toward basic and acidic residues: residues 172–186 (ENVK…ERKS) and 194–209 (TVEK…KSAP). Residues 214-224 (ASLKKSASQKK) show a composition bias toward low complexity. The span at 226 to 237 (AAKESKPKKVLL) shows a compositional bias: basic and acidic residues. Residues 245–254 (ARPARGGRPN) show a composition bias toward low complexity. Residues 263-277 (ETASKTQQAPPTLSE) show a composition bias toward polar residues.

This sequence belongs to the STM1 family. As to quaternary structure, associates with mature 80S ribosomes. Binds to the head domain of the 40S ribosomal subunit and prevents mRNA binding by inserting its alpha-helix domain towards the mRNA entry tunnel at the decoding site, where it blocks the binding of tRNA and mRNA at the A- and P-sites. Interacts with eEF2; interaction sequesters eEF2 at the A-site of the ribosome, thereby blocking the interaction sites of the mRNA-tRNA complex, promoting ribosome stabilization and hibernation. Interacts with sad1. Phosphorylation by TORC1 upon nutrient replenishment inhibits STM1 and causes its release from dormant ribosomes.

Its subcellular location is the cytoplasm. Functionally, ribosome preservation factor that protect a small pool of nontranslating, vacant ribosomes in cells under nutrient starvation conditions. Under nutrient-limiting conditions, cells reduce ribosome biogenesis and degrade ribosomes via autophagy (ribophagy) or proteasomal degradation. To avoid excessive degradation during starvation, STM1 binds to and protects 80S ribosomes from proteasomal degradation. Under nutrient-sufficient conditions, TORC1 phosphorylates and inhibits STM1 to prevent formation of dormant 80S ribosomes. Acts as an inhibitor of mRNA translation by promoting ribosome hibernation: clamps the two ribosomal subunits, thereby preventing their dissociation, and inhibits translation by excluding mRNA-binding. Acts via its association with eEF2, promoting ribosome stabilization and storage in an inactive state. May also repress translation by preventing association of eEF3 with ribosomes. Binds specifically G4 quadruplex (these are four-stranded right-handed helices, stabilized by guanine base quartets) and purine motif triplex (characterized by a third, antiparallel purine-rich DNA strand located within the major groove of a homopurine stretch of duplex DNA) nucleic acid structures. These structures may be present at telomeres or in rRNAs. Extends chronological lifespan when overexpressed. This Schizosaccharomyces pombe (strain 972 / ATCC 24843) (Fission yeast) protein is Ribosome-associated protein oga1.